Here is a 323-residue protein sequence, read N- to C-terminus: Lipoyl synthase (323 aa).

Positions 1 to 27 (MVTILDRTSSDEKRIRHPEKAHRPDTE) are disordered. Residues C61, C66, C72, C87, C91, C94, and S300 each contribute to the [4Fe-4S] cluster site. The region spanning 73 to 289 (WEKKHATFMI…ETVAYAKGFL (217 aa)) is the Radical SAM core domain.

This sequence belongs to the radical SAM superfamily. Lipoyl synthase family. Requires [4Fe-4S] cluster as cofactor.

The protein resides in the cytoplasm. The enzyme catalyses [[Fe-S] cluster scaffold protein carrying a second [4Fe-4S](2+) cluster] + N(6)-octanoyl-L-lysyl-[protein] + 2 oxidized [2Fe-2S]-[ferredoxin] + 2 S-adenosyl-L-methionine + 4 H(+) = [[Fe-S] cluster scaffold protein] + N(6)-[(R)-dihydrolipoyl]-L-lysyl-[protein] + 4 Fe(3+) + 2 hydrogen sulfide + 2 5'-deoxyadenosine + 2 L-methionine + 2 reduced [2Fe-2S]-[ferredoxin]. The protein operates within protein modification; protein lipoylation via endogenous pathway; protein N(6)-(lipoyl)lysine from octanoyl-[acyl-carrier-protein]: step 2/2. Its function is as follows. Catalyzes the radical-mediated insertion of two sulfur atoms into the C-6 and C-8 positions of the octanoyl moiety bound to the lipoyl domains of lipoate-dependent enzymes, thereby converting the octanoylated domains into lipoylated derivatives. The chain is Lipoyl synthase from Agrobacterium fabrum (strain C58 / ATCC 33970) (Agrobacterium tumefaciens (strain C58)).